Here is a 107-residue protein sequence, read N- to C-terminus: MENAFKLLYKTIEERKESPLPESYTNYLFSKGEDKILKKIGEECAEVIIACKNNDKEEVVKEMVDVFYHCFVLLAEKNIALEDVMREVKERNGKLSRVGDRREIDTL.

Belongs to the PRA-PH family.

Its subcellular location is the cytoplasm. It carries out the reaction 1-(5-phospho-beta-D-ribosyl)-ATP + H2O = 1-(5-phospho-beta-D-ribosyl)-5'-AMP + diphosphate + H(+). The protein operates within amino-acid biosynthesis; L-histidine biosynthesis; L-histidine from 5-phospho-alpha-D-ribose 1-diphosphate: step 2/9. The protein is Phosphoribosyl-ATP pyrophosphatase of Bacillus cereus (strain G9842).